The primary structure comprises 489 residues: Endothelial zinc finger protein induced by tumor necrosis factor alpha (489 aa).

Residues Met1 to Leu15 are compositionally biased toward basic and acidic residues. Disordered regions lie at residues Met1–Ile61 and Glu98–Met122. C2H2-type zinc fingers lie at residues Tyr130–His152, Phe158–His180, Tyr186–His208, Tyr214–His236, Tyr242–His264, Tyr270–His292, Tyr298–His320, Tyr326–His348, Phe354–His376, Tyr382–His404, Tyr410–His432, Tyr438–His460, and Tyr466–His488.

Belongs to the krueppel C2H2-type zinc-finger protein family. In terms of tissue distribution, highly expressed in placenta, followed by brain, testis, pancreas, heart, small intestine, muscle, uterus, prostate and peripheral blood leukocytes. Not detected in liver, lung, colon, stomach, salivary and thyroid gland.

Its subcellular location is the nucleus. Functionally, may be involved in transcriptional regulation. The chain is Endothelial zinc finger protein induced by tumor necrosis factor alpha (ZNF71) from Homo sapiens (Human).